A 439-amino-acid polypeptide reads, in one-letter code: Proline--tRNA ligase (439 aa).

This sequence belongs to the class-II aminoacyl-tRNA synthetase family. ProS type 2 subfamily. In terms of assembly, homodimer.

Its subcellular location is the cytoplasm. The catalysed reaction is tRNA(Pro) + L-proline + ATP = L-prolyl-tRNA(Pro) + AMP + diphosphate. In terms of biological role, catalyzes the attachment of proline to tRNA(Pro) in a two-step reaction: proline is first activated by ATP to form Pro-AMP and then transferred to the acceptor end of tRNA(Pro). This Phenylobacterium zucineum (strain HLK1) protein is Proline--tRNA ligase.